The sequence spans 460 residues: ATP synthase subunit beta (460 aa).

150 to 157 (GGAGVGKT) contributes to the ATP binding site.

This sequence belongs to the ATPase alpha/beta chains family. In terms of assembly, F-type ATPases have 2 components, CF(1) - the catalytic core - and CF(0) - the membrane proton channel. CF(1) has five subunits: alpha(3), beta(3), gamma(1), delta(1), epsilon(1). CF(0) has three main subunits: a(1), b(2) and c(9-12). The alpha and beta chains form an alternating ring which encloses part of the gamma chain. CF(1) is attached to CF(0) by a central stalk formed by the gamma and epsilon chains, while a peripheral stalk is formed by the delta and b chains.

It localises to the cell inner membrane. It catalyses the reaction ATP + H2O + 4 H(+)(in) = ADP + phosphate + 5 H(+)(out). Functionally, produces ATP from ADP in the presence of a proton gradient across the membrane. The catalytic sites are hosted primarily by the beta subunits. This chain is ATP synthase subunit beta, found in Enterobacter sp. (strain 638).